The sequence spans 407 residues: Enolase-binding protein (407 aa).

The N-terminal stretch at 1–24 (MALGNALYPLTATVFLCVVGFATS) is a signal peptide. Over 25 to 366 (SNENSRFLIN…FGQAYPGFRN (342 aa)) the chain is Extracellular. N-linked (GlcNAc...) asparagine glycans are attached at residues N52, N78, N161, and N250. A helical transmembrane segment spans residues 367–387 (VAIGAAILFFSVLGVAIIDMI). At 388–407 (RRTIANRRAKRLHLGKYSRT) the chain is on the cytoplasmic side.

As to quaternary structure, (Microbial infection) Interacts with ENO/enolase from parasites P.berghei and P.falciparum. As to expression, expressed in the female midgut epithelium.

The protein localises to the cell membrane. In terms of biological role, (Microbial infection) Acts as a receptor for ENO/enolase from parasites P.berghei and P.falciparum. The interaction is involved in the invasion of the mosquito midgut by P.berghei ookinete, but is dispensable for P.falciparum ookinete invasion. The polypeptide is Enolase-binding protein (Anopheles gambiae (African malaria mosquito)).